The primary structure comprises 106 residues: MGKTSDRLDEQHLAEEQVKDAVRPPSMYKVILINDDYTPMEFVIDVLQKFFSYDVERATQLMLRVHYQGKAVCGIYTAEVAETKAVHVNRYARENEHPLLCTLEKA.

The protein belongs to the ClpS family. In terms of assembly, binds to the N-terminal domain of the chaperone ClpA.

In terms of biological role, involved in the modulation of the specificity of the ClpAP-mediated ATP-dependent protein degradation. The sequence is that of ATP-dependent Clp protease adapter protein ClpS from Sodalis glossinidius (strain morsitans).